The chain runs to 185 residues: Small ribosomal subunit protein uS5 (185 aa).

The S5 DRBM domain maps to 29–92; that stretch reads LEEKVVKINR…EKAKKQLVRI (64 aa).

It belongs to the universal ribosomal protein uS5 family. As to quaternary structure, part of the 30S ribosomal subunit. Contacts proteins S4 and S8.

In terms of biological role, with S4 and S12 plays an important role in translational accuracy. Located at the back of the 30S subunit body where it stabilizes the conformation of the head with respect to the body. In Aster yellows witches'-broom phytoplasma (strain AYWB), this protein is Small ribosomal subunit protein uS5.